Here is a 445-residue protein sequence, read N- to C-terminus: Tubulin beta chain (445 aa).

Residues 1–4 (MREI) carry the MREI motif motif. Gln-11, Glu-69, Ser-138, Gly-142, Thr-143, Gly-144, Asn-204, and Asn-226 together coordinate GTP. Glu-69 is a binding site for Mg(2+). The tract at residues 421 to 445 (EYQQYQDATAEEEGEGEEEGDEEVA) is disordered. Residues 429–445 (TAEEEGEGEEEGDEEVA) show a composition bias toward acidic residues. At Glu-438 the chain carries 5-glutamyl polyglutamate.

The protein belongs to the tubulin family. Dimer of alpha and beta chains. A typical microtubule is a hollow water-filled tube with an outer diameter of 25 nm and an inner diameter of 15 nM. Alpha-beta heterodimers associate head-to-tail to form protofilaments running lengthwise along the microtubule wall with the beta-tubulin subunit facing the microtubule plus end conferring a structural polarity. Microtubules usually have 13 protofilaments but different protofilament numbers can be found in some organisms and specialized cells. Requires Mg(2+) as cofactor. Post-translationally, some glutamate residues at the C-terminus are polyglycylated, resulting in polyglycine chains on the gamma-carboxyl group. Glycylation is mainly limited to tubulin incorporated into axonemes (cilia and flagella) whereas glutamylation is prevalent in neuronal cells, centrioles, axonemes, and the mitotic spindle. Both modifications can coexist on the same protein on adjacent residues, and lowering polyglycylation levels increases polyglutamylation, and reciprocally. The precise function of polyglycylation is still unclear. Some glutamate residues at the C-terminus are polyglutamylated, resulting in polyglutamate chains on the gamma-carboxyl group. Polyglutamylation plays a key role in microtubule severing by spastin (SPAST). SPAST preferentially recognizes and acts on microtubules decorated with short polyglutamate tails: severing activity by SPAST increases as the number of glutamates per tubulin rises from one to eight, but decreases beyond this glutamylation threshold. As to expression, brain.

The protein resides in the cytoplasm. The protein localises to the cytoskeleton. Its function is as follows. Tubulin is the major constituent of microtubules, a cylinder consisting of laterally associated linear protofilaments composed of alpha- and beta-tubulin heterodimers. Microtubules grow by the addition of GTP-tubulin dimers to the microtubule end, where a stabilizing cap forms. Below the cap, tubulin dimers are in GDP-bound state, owing to GTPase activity of alpha-tubulin. The sequence is that of Tubulin beta chain from Pseudopleuronectes americanus (Winter flounder).